A 61-amino-acid polypeptide reads, in one-letter code: Large ribosomal subunit protein eL37 (61 aa).

Zn(2+)-binding residues include Cys-18, Cys-21, Cys-33, and Cys-36. The C4-type zinc-finger motif lies at 18–36 (CRRCGRNAYNPTKKYCASC).

The protein belongs to the eukaryotic ribosomal protein eL37 family. Zn(2+) serves as cofactor.

Its function is as follows. Binds to the 23S rRNA. The protein is Large ribosomal subunit protein eL37 of Methanosphaera stadtmanae (strain ATCC 43021 / DSM 3091 / JCM 11832 / MCB-3).